Reading from the N-terminus, the 351-residue chain is Peptide chain release factor 1 (351 aa).

The residue at position 229 (Gln229) is an N5-methylglutamine. The segment at 279 to 300 (ADAERAADRKSQVGSGDRSERI) is disordered.

The protein belongs to the prokaryotic/mitochondrial release factor family. Post-translationally, methylated by PrmC. Methylation increases the termination efficiency of RF1.

The protein localises to the cytoplasm. Its function is as follows. Peptide chain release factor 1 directs the termination of translation in response to the peptide chain termination codons UAG and UAA. This Paracoccus denitrificans (strain Pd 1222) protein is Peptide chain release factor 1.